Here is a 413-residue protein sequence, read N- to C-terminus: MAAALLARACGPVRGALWPRDCRRLHTIFQSVELPETYQMLRQTCRDFAEKELVPIAAQVDKEHRFPEAQVKKMGELGLMAMDVPEELSGAGLDYLAYTIAMEEISRGCASTGVIMSVNNFLYLGPILKFGSKEQKQQWITPFTSGDKVGCFALSEPGNGSDAGAAATTAQADHDSWVLSGTKAWITNAWEASAAVVFASTDRSLQNKGISAFLVPMPTAGLTLGKKEDKLGIRASSTANLIFEDCRIPKENLLGEPGMGFKIAMKTLDMGRIGIASKALGISQAALDCAVNYAENRRAFGVPLTKLQGIQFKLADMALALESARLLTWRAAMLKDNKKNPFIKEPAMAKLAASEAATAITHQAIQILGGMGYVTEMPAERHYRDARITEIYEGTSEIQRLVIAGHLLKSYRS.

The N-terminal 24 residues, M1–R24, are a transit peptide targeting the mitochondrion. At T27 the chain carries Phosphothreonine. Residue K51 is modified to N6-acetyllysine; alternate. Position 51 is an N6-succinyllysine; alternate (K51). K72 is modified (N6-acetyllysine). Position 129 is an N6-acetyllysine; alternate (K129). K129 carries the N6-succinyllysine; alternate modification. FAD is bound by residues F152–S161 and W185–T187. S161 is a substrate binding site. The residue at position 208 (K208) is an N6-acetyllysine. Residue K262 is modified to N6-acetyllysine; alternate. K262 is subject to N6-succinyllysine; alternate. D269–R272 is a substrate binding site. R297 is a binding site for FAD. K306 carries the post-translational modification N6-acetyllysine; alternate. K306 bears the N6-succinyllysine; alternate mark. FAD contacts are provided by residues Q308 and Q366–G370. The Proton acceptor role is filled by E393. G394 contributes to the substrate binding site. T395–E397 contributes to the FAD binding site.

The protein belongs to the acyl-CoA dehydrogenase family. As to quaternary structure, homotetramer. The cofactor is FAD.

It localises to the mitochondrion matrix. The enzyme catalyses a short-chain 2,3-saturated fatty acyl-CoA + oxidized [electron-transfer flavoprotein] + H(+) = a short-chain (2E)-enoyl-CoA + reduced [electron-transfer flavoprotein]. The catalysed reaction is butanoyl-CoA + oxidized [electron-transfer flavoprotein] + H(+) = (2E)-butenoyl-CoA + reduced [electron-transfer flavoprotein]. It catalyses the reaction pentanoyl-CoA + oxidized [electron-transfer flavoprotein] + H(+) = (2E)-pentenoyl-CoA + reduced [electron-transfer flavoprotein]. It carries out the reaction hexanoyl-CoA + oxidized [electron-transfer flavoprotein] + H(+) = (2E)-hexenoyl-CoA + reduced [electron-transfer flavoprotein]. It functions in the pathway lipid metabolism; mitochondrial fatty acid beta-oxidation. Functionally, short-chain specific acyl-CoA dehydrogenase is one of the acyl-CoA dehydrogenases that catalyze the first step of mitochondrial fatty acid beta-oxidation, an aerobic process breaking down fatty acids into acetyl-CoA and allowing the production of energy from fats. The first step of fatty acid beta-oxidation consists in the removal of one hydrogen from C-2 and C-3 of the straight-chain fatty acyl-CoA thioester, resulting in the formation of trans-2-enoyl-CoA. Among the different mitochondrial acyl-CoA dehydrogenases, short-chain specific acyl-CoA dehydrogenase acts specifically on acyl-CoAs with saturated 4 to 6 carbons long primary chains. This Sus scrofa (Pig) protein is Short-chain specific acyl-CoA dehydrogenase, mitochondrial (ACADS).